A 972-amino-acid polypeptide reads, in one-letter code: Structural polyprotein (972 aa).

D26 is an a divalent metal cation binding site. Residues 509–734 (SGGPDGKFSR…YLGELMASNA (226 aa)) enclose the Peptidase S50 domain. S633 functions as the Nucleophile in the catalytic mechanism. The active site involves K674. Disordered regions lie at residues 794 to 817 (KLIS…AQEA) and 916 to 972 (NGGR…NAEV). Positions 801–817 (KHPEKPKGPDQHHAQEA) are enriched in basic and acidic residues. The segment covering 963-972 (FTPSGDNAEV) has biased composition (polar residues).

In terms of assembly, homotrimer. A central divalent metal (possibly cobalt) stabilizes the VP2 trimer. As to quaternary structure, homodimer. interacts (via C-terminus) with VP1 in the cytoplasm. Interacts with VP2. Post-translationally, specific enzymatic cleavages yield mature proteins. The capsid assembly seems to be regulated by polyprotein processing. The protease VP4 cleaves itself off the polyprotein, thus releasing pre-VP2 and VP3 within the infected cell. During capsid assembly, the C-terminus of pre-VP2 is further processed by VP4, giving rise to VP2, the external capsid protein and three small peptides that all stay closely associated with the capsid.

The protein resides in the virion. It is found in the host cytoplasm. Its function is as follows. Capsid protein VP2 self assembles to form an icosahedral capsid with a T=13 symmetry, about 70 nm in diameter, and consisting of 260 VP2 trimers. The capsid encapsulates the genomic dsRNA. VP2 is also involved in attachment and entry into the host cell. The precursor of VP2 plays an important role in capsid assembly. First, pre-VP2 and VP2 oligomers assemble to form a procapsid. Then, the pre-VP2 intermediates may be processed into VP2 proteins by proteolytic cleavage mediated by VP4 to obtain the mature virion. The final capsid is composed of pentamers and hexamers but VP2 has a natural tendency to assemble into all-pentameric structures. Therefore pre-VP2 may be required to allow formation of the hexameric structures. Functionally, protease VP4 is a serine protease that cleaves the polyprotein into its final products. Pre-VP2 is first partially cleaved, and may be completely processed by VP4 upon capsid maturation. In terms of biological role, capsid protein VP3 plays a key role in virion assembly by providing a scaffold for the capsid made of VP2. May self-assemble to form a T=4-like icosahedral inner-capsid composed of at least 180 trimers. Plays a role in genomic RNA packaging by recruiting VP1 into the capsid and interacting with the dsRNA genome segments to form a ribonucleoprotein complex. Additionally, the interaction of the VP3 C-terminal tail with VP1 removes the inherent structural blockade of the polymerase active site. Thus, VP3 can also function as a transcriptional activator. Its function is as follows. Structural peptide 1 is a small peptide derived from pre-VP2 C-terminus. It destabilizes and perforates cell membranes, suggesting a role during entry. Structural peptide 2 is a small peptide derived from pVP2 C-terminus. It is not essential for the virus viability, but viral growth is affected when missing. Functionally, structural peptide 3 is a small peptide derived from pVP2 C-terminus. It is not essential for the virus viability, but viral growth is affected when missing. The polypeptide is Structural polyprotein (Infectious pancreatic necrosis virus (strain Sp) (IPNV)).